The primary structure comprises 684 residues: Gabija protein GajB (684 aa).

One can recognise a UvrD-like helicase ATP-binding domain in the interval 14 to 351; that stretch reads EQKSINAIFN…IEVINKIRND (338 aa). 35–42 contributes to the ATP binding site; sequence SGAGAGKT.

Belongs to the helicase family. Homodimer. Interacts with GajA; 2 GajB dimers dock at opposite sides of the GajA complex to form a 4:4 GajA-GajB assembly (GajAB). GajAB interacts with Bacillus phage Phi3T Gad1 protein; this interaction forms a 4:4:8 GajAB-Gad1 complex and leads to GajAB inhibition.

Component of antiviral defense system Gabija type II, composed of GajA and GajB. Expression of Gabija type II in B.subtilis (strain BEST7003) confers resistance to phages phi105, and SpBeta. May be a helicase or contribute to GajA activation. In Bacillus cereus (strain HuB5-5), this protein is Gabija protein GajB.